The following is a 335-amino-acid chain: Nucleoid-associated protein Pput_1012 (335 aa).

The protein belongs to the YejK family.

The protein resides in the cytoplasm. It is found in the nucleoid. The protein is Nucleoid-associated protein Pput_1012 of Pseudomonas putida (strain ATCC 700007 / DSM 6899 / JCM 31910 / BCRC 17059 / LMG 24140 / F1).